The primary structure comprises 1304 residues: Splicing factor 3B subunit 1 (1304 aa).

2 disordered regions span residues 100-119 and 124-148; these read QYDP…EDEY and RTMI…PKMN. Over residues 104 to 119 the composition is skewed to basic and acidic residues; the sequence is FAEHRPPKIADREDEY. Residue Thr-125 is modified to Phosphothreonine. At Ser-129 the chain carries Phosphoserine. N6-acetyllysine is present on Lys-141. A Phosphothreonine modification is found at Thr-142. Arg-157 is modified (citrulline). The disordered stretch occupies residues 173 to 360; it reads AEKAKAGELK…PVLTPGKTPI (188 aa). Positions 190-342 are U2AF homology region; mediates interaction with RBM39; the sequence is SQPPSKRKRR…KRKSRWDETP (153 aa). Ser-194 carries the post-translational modification Phosphoserine. Residues Thr-203, Thr-207, and Thr-211 each carry the phosphothreonine modification. At Lys-214 the chain carries N6-acetyllysine; alternate. Residue Lys-214 forms a Glycyl lysine isopeptide (Lys-Gly) (interchain with G-Cter in SUMO2); alternate linkage. Phosphothreonine occurs at positions 223 and 227. An interaction with PPP1R8 region spans residues 223–491; that stretch reads TPGHTPSLRW…VDESTLSPEE (269 aa). Phosphoserine is present on Ser-229. Residues 231-241 show a composition bias toward basic and acidic residues; the sequence is RWDETPGRAKG. Thr-235, Thr-244, Thr-248, Thr-257, Thr-261, Thr-267, Thr-273, and Thr-278 each carry phosphothreonine. Ser-287 bears the Phosphoserine mark. Over residues 291 to 304 the composition is skewed to basic and acidic residues; sequence NRWDETPKTERDTP. Phosphothreonine is present on residues Thr-296, Thr-299, Thr-303, and Thr-313. Position 322 is a phosphoserine (Ser-322). Residues Thr-326 and Thr-328 each carry the phosphothreonine modification. Residue Ser-332 is modified to Phosphoserine. Residue Thr-341 is modified to Phosphothreonine. Residues 342-352 show a composition bias toward polar residues; it reads PASQMGGSTPV. A phosphoserine mark is found at Ser-344 and Ser-349. A phosphothreonine mark is found at Thr-350 and Thr-354. A Phosphoserine modification is found at Ser-400. A Glycyl lysine isopeptide (Lys-Gly) (interchain with G-Cter in SUMO2); alternate cross-link involves residue Lys-413. A Glycyl lysine isopeptide (Lys-Gly) (interchain with G-Cter in SUMO1); alternate cross-link involves residue Lys-413. Thr-426 carries the phosphothreonine modification. A Glycyl lysine isopeptide (Lys-Gly) (interchain with G-Cter in SUMO2) cross-link involves residue Lys-430. Thr-434 carries the phosphothreonine; by DYRK1A modification. The residue at position 436 (Thr-436) is a Phosphothreonine. The residue at position 488 (Ser-488) is a Phosphoserine. 11 HEAT repeats span residues 529 to 568, 569 to 603, 604 to 641, 643 to 677, 680 to 718, 763 to 801, 843 to 881, 1010 to 1048, 1052 to 1090, 1122 to 1160, and 1163 to 1201; these read GPLF…DLVR, PYVH…LAKA, AGLA…ALGI, SLLP…LMGC, LPHL…AATP, NYYT…TDGV, KVGA…NLGA, TPPI…RGAE, AREW…AIGP, TCSP…YIGE, and KDYI…GVYG. The segment at 529 to 568 is interaction with SF3B14; the sequence is GPLFNQILPLLMSPTLEDQERHLLVKVIDRILYKLDDLVR. Residues 547–550 form an interaction with PHF5A region; it reads QERH. N6-acetyllysine occurs at positions 554 and 562. The tract at residues 1156–1157 is interaction with PHF5A; that stretch reads EY. Residues 1248 to 1304 are interaction with SF3B3 and SF3B5; it reads QYCLQGLFHPARKVRDVYWKIYNSIYIGSQDALIAHYPRIYNDDKNTYIRYELDYIL.

Belongs to the SF3B1 family. As to quaternary structure, component of the 17S U2 SnRNP complex, a ribonucleoprotein complex that contains small nuclear RNA (snRNA) U2 and a number of specific proteins. Part of the SF3B subcomplex of the 17S U2 SnRNP complex. SF3B associates with the splicing subcomplex SF3A and a 12S RNA unit to form the U2 small nuclear ribonucleoproteins complex (U2 snRNP). Within the SF3B complex, interacts directly (via HEAT domain) with SF3B3, SF3B5, SF3B6 and (via HEAT domain) with PHF5A. The SF3B subcomplex interacts with U2AF2. Identified in the spliceosome C complex. Component of the minor (U12-type spliceosome) spliceosome. Within the minor spliceosome complex, interacts with SCNM1 and CRIPT. Component of the B-WICH complex, at least composed of SMARCA5/SNF2H, BAZ1B/WSTF, SF3B1, DEK, MYO1C, ERCC6, MYBBP1A and DDX21. Phosphorylated form interacts with PPP1R8. Interacts with PQBP1. Interacts with RBM17. Interacts with RBM39. Interacts with SETX. Interacts with RBM15. Interacts with USH1G. Interacts with SDE2. Interacts with U2AF1. Interacts with CACTIN. Interacts with ZRSR1. Interacts with CYREN. In terms of processing, phosphorylated. Phosphorylation occurs concomitantly with the splicing catalytic steps. Phosphorylation on Thr-244, Thr-248 and Thr-313 by cyclin-dependent kinases promotes interaction with PPP1R8 during mitosis. Post-translationally, citrullinated by PADI4.

The protein localises to the nucleus. Its subcellular location is the nucleus speckle. Component of the 17S U2 SnRNP complex of the spliceosome, a large ribonucleoprotein complex that removes introns from transcribed pre-mRNAs. The 17S U2 SnRNP complex (1) directly participates in early spliceosome assembly and (2) mediates recognition of the intron branch site during pre-mRNA splicing by promoting the selection of the pre-mRNA branch-site adenosine, the nucleophile for the first step of splicing. Within the 17S U2 SnRNP complex, SF3B1 is part of the SF3B subcomplex, which is required for 'A' complex assembly formed by the stable binding of U2 snRNP to the branchpoint sequence in pre-mRNA. Sequence independent binding of SF3A and SF3B subcomplexes upstream of the branch site is essential, it may anchor U2 snRNP to the pre-mRNA. May also be involved in the assembly of the 'E' complex. Also acts as a component of the minor spliceosome, which is involved in the splicing of U12-type introns in pre-mRNAs. Together with other U2 snRNP complex components may also play a role in the selective processing of microRNAs (miRNAs) from the long primary miRNA transcript, pri-miR-17-92. This Homo sapiens (Human) protein is Splicing factor 3B subunit 1.